The sequence spans 505 residues: Lysine--tRNA ligase (505 aa).

Mg(2+)-binding residues include glutamate 415 and glutamate 422.

The protein belongs to the class-II aminoacyl-tRNA synthetase family. In terms of assembly, homodimer. Mg(2+) is required as a cofactor.

It is found in the cytoplasm. It catalyses the reaction tRNA(Lys) + L-lysine + ATP = L-lysyl-tRNA(Lys) + AMP + diphosphate. The sequence is that of Lysine--tRNA ligase from Edwardsiella ictaluri (strain 93-146).